Here is a 204-residue protein sequence, read N- to C-terminus: B9 domain-containing protein 1 (204 aa).

The region spanning 9 to 127 (FLLMITGQVE…TIPMFVPEST (119 aa)) is the C2 B9-type domain.

Belongs to the B9D family. In terms of assembly, part of the tectonic-like complex (also named B9 complex).

Its subcellular location is the cytoplasm. The protein resides in the cytoskeleton. It is found in the cilium basal body. Component of the tectonic-like complex, a complex localized at the transition zone of primary cilia and acting as a barrier that prevents diffusion of transmembrane proteins between the cilia and plasma membranes. Required for ciliogenesis and sonic hedgehog/SHH signaling. This is B9 domain-containing protein 1 (B9d1) from Mus musculus (Mouse).